Consider the following 393-residue polypeptide: Staphopain B (393 aa).

Residues 1–36 (MNSSCKSRVFNIISIIMVSMLILSLGAFANNNKAKA) form the signal peptide. Residues 37–219 (DSHSKQLEIN…KVEENEAIQE (183 aa)) constitute a propeptide that is removed on maturation. Active-site residues include cysteine 243, histidine 340, and asparagine 360.

It belongs to the peptidase C47 family. As to quaternary structure, in the cytoplasm, prematurely activated/folded SspB forms a stable non-covalent complex with SspC. In terms of processing, proteolytically cleaved by staphylococcal serine protease (SspA).

The protein resides in the secreted. Prematurely activated/folded staphopain B is inhibited by staphostatin B (SspC), which is probably required to protect staphylococcal cytoplasmic proteins from degradation by SspB. Also inactivated by E-64 and stimulated by EDTA. Its function is as follows. Cysteine protease that plays an important role in the inhibition of host innate immune response. Degrades host elastin, fibrogen, fibronectin and kininogen. Blocks phagocytosis of opsonised S.aureus by neutrophils and monocytes by inducing their death in a proteolytic activity-dependent manner. Decreases surface expression of the 'don't eat me' signal CD31 on neutrophils. Cleaves host galectin-3/LGALS3, thereby inhibiting the neutrophil-activating ability of the lectin. This chain is Staphopain B (sspB), found in Staphylococcus aureus (strain NCTC 8325 / PS 47).